Reading from the N-terminus, the 99-residue chain is Nucleoid-associated protein EbfC (99 aa).

The protein belongs to the YbaB/EbfC family. In terms of assembly, homodimer.

It is found in the cytoplasm. Its subcellular location is the nucleoid. In terms of biological role, binds to DNA and alters its conformation. May be involved in regulation of gene expression, nucleoid organization and DNA protection. This chain is Nucleoid-associated protein EbfC, found in Borrelia turicatae (strain 91E135).